We begin with the raw amino-acid sequence, 224 residues long: LexA repressor (224 aa).

Residues 31 to 51 constitute a DNA-binding region (H-T-H motif); that stretch reads RAEIANTLGFKSANAAEEHLQ. Catalysis depends on for autocatalytic cleavage activity residues serine 142 and lysine 179.

The protein belongs to the peptidase S24 family. In terms of assembly, homodimer.

It carries out the reaction Hydrolysis of Ala-|-Gly bond in repressor LexA.. Functionally, represses a number of genes involved in the response to DNA damage (SOS response), including recA and lexA. In the presence of single-stranded DNA, RecA interacts with LexA causing an autocatalytic cleavage which disrupts the DNA-binding part of LexA, leading to derepression of the SOS regulon and eventually DNA repair. The polypeptide is LexA repressor (Delftia acidovorans (strain DSM 14801 / SPH-1)).